The sequence spans 432 residues: Tol-Pal system protein TolB (432 aa).

A signal peptide spans 1 to 21 (MSTLIRIALFALALMAGAAQA).

The protein belongs to the TolB family. As to quaternary structure, the Tol-Pal system is composed of five core proteins: the inner membrane proteins TolA, TolQ and TolR, the periplasmic protein TolB and the outer membrane protein Pal. They form a network linking the inner and outer membranes and the peptidoglycan layer.

It is found in the periplasm. In terms of biological role, part of the Tol-Pal system, which plays a role in outer membrane invagination during cell division and is important for maintaining outer membrane integrity. In Pseudomonas aeruginosa (strain ATCC 15692 / DSM 22644 / CIP 104116 / JCM 14847 / LMG 12228 / 1C / PRS 101 / PAO1), this protein is Tol-Pal system protein TolB.